The sequence spans 459 residues: MAHSRARRRKRASATQLYQTCKLTGTCPPDVIPKVEHNTIADQILKWGSLGVFFGGLGIGTGSGTGGRTGYVPLQTSAKPSITSGPMARPPVVVEPVAPSDPSIVSLIEESAIINAGAPEIVPPAHGGFTITSSETTTPAILDVSVTSHTTTSIFRNPVFTEPSVTQPQPPVEANGHILISAPTVTSHPIEEIPLDTFVVSSSDSGPTSSTPVPGTAPRPRVGLYSRALHQVQVTDPAFLSTPQRLITYDNPVYEGEDVSVQFSHDSIHNAPDEAFMDIIRLHRPAIASRRGLVRYSRIGQRGSMHTRSGKHIGARIHYFYDISPIAQAAEEIEMHPLVAAQDDTFDIYAESFEPGINPTQHPVTNISDTYLTSTPNTVTQPWGNTTVPLSLPNDLFLQSGPDITFPTAPMGTPFSPVTPALPTGPVFITGSGFYLHPAWYFARKRRKRIPLFFSDVAA.

The Nuclear localization signal motif lies at 1 to 12 (MAHSRARRRKRA). The cysteines at positions 21 and 27 are disulfide-linked. Residues 442 to 450 (FARKRRKRI) carry the Nuclear localization signal motif.

This sequence belongs to the papillomaviridae L2 protein family. In terms of assembly, interacts with major capsid protein L1. Interacts with E2; this interaction inhibits E2 transcriptional activity but not the DNA replication function E2. Interacts with host GADD45GIP1. Interacts with host HSPA8; this interaction is required for L2 nuclear translocation. Interacts with host importins KPNB2 and KPNB3. Forms a complex with importin alpha2-beta1 heterodimers via interaction with the importin alpha2 adapter. Interacts with host DYNLT1; this interaction is essential for virus intracellular transport during entry. Interacts (via C-terminus) with host retromer subunits VPS35 and VPS29. Post-translationally, highly phosphorylated.

The protein localises to the virion. The protein resides in the host nucleus. Its subcellular location is the host early endosome. It localises to the host Golgi apparatus. Its function is as follows. Minor protein of the capsid that localizes along the inner surface of the virion, within the central cavities beneath the L1 pentamers. Plays a role in capsid stabilization through interaction with the major capsid protein L1. Once the virion enters the host cell, L2 escorts the genomic DNA into the nucleus by promoting escape from the endosomal compartments and traffic through the host Golgi network. Mechanistically, the C-terminus of L2 possesses a cell-penetrating peptide that protudes from the host endosome, interacts with host cytoplasmic retromer cargo and thereby mediates the capsid delivery to the host trans-Golgi network. Plays a role through its interaction with host dynein in the intracellular microtubule-dependent transport of viral capsid toward the nucleus. Mediates the viral genome import into the nucleus through binding to host importins. Once within the nucleus, L2 localizes viral genomes to host PML bodies in order to activate early gene expression for establishment of infection. Later on, promotes late gene expression by interacting with the viral E2 protein and by inhibiting its transcriptional activation functions. During virion assembly, encapsidates the genome by direct interaction with the viral DNA. This Homo sapiens (Human) protein is Minor capsid protein L2.